Reading from the N-terminus, the 712-residue chain is MAGGPGPGEPAAPGAQHFLYEVPPWVMCRFYKVMDALEPADWCQFAALIVRDQTELRLCERSGQRTASVLWPWINRNARVADLVHILTHLQLLRARDIITAWHPPAPLPSPGTTAPRPSSIPAPAEAEAWSPRKLPSSASTFLSPAFPGSQTHSGPELGLVPSPASLWPPPPSPAPSSTKPGPESSVSLLQGARPFPFCWPLCEISRGTHNFSEELKIGEGGFGCVYRAVMRNTVYAVKRLKENADLEWTAVKQSFLTEVEQLSRFRHPNIVDFAGYCAQNGFYCLVYGFLPNGSLEDRLHCQTQACPPLSWPQRLDILLGTARAIQFLHQDSPSLIHGDIKSSNVLLDERLTPKLGDFGLARFSRFAGSSPSQSSMVARTQTVRGTLAYLPEEYIKTGRLAVDTDTFSFGVVVLETLAGQRAVKTHGARTKYLKDLVEEEAEEAGVALRSTQSTLQAGLAADAWAAPIAMQIYKKHLDPRPGPCPPELGLGLGQLACCCLHRRAKRRPPMTQVYERLEKLQAVVAGVPGHSEAASCIPPSPQENSYVSSTGRAHSGAAPWQPLAAPSGASAQAAEQLQRGPNQPVESDESLGGLSAALRSWHLTPSCPLDPAPLREAGCPQGDTAGESSWGSGPGSRPTAVEGLALGSSASSSSEPPQIIINPARQKMVQKLALYEDGALDSLQLLSSSSLPGLGLEQDRQGPEESDEFQS.

Residues 27 to 106 (MCRFYKVMDA…DIITAWHPPA (80 aa)) form the Death domain. Position 66 is a phosphothreonine; by PKC/PRKCI (Thr66). The segment at 105–187 (PAPLPSPGTT…STKPGPESSV (83 aa)) is disordered. Residues 110–211 (SPGTTAPRPS…LCEISRGTHN (102 aa)) are proST region. Low complexity predominate over residues 115–133 (APRPSSIPAPAEAEAWSPR). Position 131 is a phosphoserine (Ser131). Residue Lys134 forms a Glycyl lysine isopeptide (Lys-Gly) (interchain with G-Cter in ubiquitin) linkage. Polar residues predominate over residues 137–154 (SSASTFLSPAFPGSQTHS). Lys180 is covalently cross-linked (Glycyl lysine isopeptide (Lys-Gly) (interchain with G-Cter in ubiquitin)). Thr209 is modified (phosphothreonine; by IRAK4). The region spanning 212–521 (FSEELKIGEG…TQVYERLEKL (310 aa)) is the Protein kinase domain. Residues 218–226 (IGEGGFGCV) and Lys239 each bind ATP. Asp340 functions as the Proton acceptor in the catalytic mechanism. Residues 342–345 (KSSN) and Asp358 each bind ATP. Phosphoserine is present on residues Ser371 and Ser375. Residue Thr387 is modified to Phosphothreonine. Disordered regions lie at residues 532–591 (SEAA…SDES), 613–660 (APLR…PPQI), and 690–712 (SSLP…EFQS). Over residues 543–553 (QENSYVSSTGR) the composition is skewed to polar residues. Residue Ser556 is modified to Phosphoserine. Low complexity-rich tracts occupy residues 562-575 (QPLA…AQAA) and 643-658 (EGLA…SEPP).

The protein belongs to the protein kinase superfamily. TKL Ser/Thr protein kinase family. Pelle subfamily. As to quaternary structure, homodimer. Forms a complex with TRAF6, PELI1, IRAK4 and MYD88. Direct binding of SMAD6 to PELI1 prevents complex formation and hence negatively regulates IL1R-TLR signaling and eventually NF-kappa-B-mediated gene expression. The TRAF6-PELI1-IRAK4-MYD88 complex recruits MAP3K7/TAK1, TAB1 and TAB2 to mediate NF-kappa-B activation. Interaction with MYD88 recruits IRAK1 to the stimulated receptor complex. Interacts with TOLLIP; this interaction occurs in the cytosol prior to receptor activation. Interacts with IL1RL1. Interacts with PELI1 and TRAF6. Interacts (when polyubiquitinated) with IKBKG/NEMO. Interacts with RSAD2/viperin. Interacts with IRAK1BP1. Interacts with PELI2. Interacts with ZC3H12A; this interaction increases the interaction between ZC3H12A and IKBKB/IKKB. Interacts with IRAK4. Interacts with PELI3. Interacts with INAVA; the interaction takes place upon PRR stimulation. Interacts (via C-terminus) with NFATC4 (via N-terminus). (Microbial infection) Interacts with mumps virus protein SH; this interaction inhibits downstream NF-kappa-B pathway activation. In terms of assembly, (Microbial infection) Interacts with alphaviruses SINV, CHIKV, RRV, VEEV and EEEV capsid proteins; the interactions lead to inhibition of IRAK1-dependent signaling. Mg(2+) is required as a cofactor. Following recruitment on the activated receptor complex, phosphorylated on Thr-209, probably by IRAK4, resulting in a conformational change of the kinase domain, allowing further phosphorylations to take place. Thr-387 phosphorylation in the activation loop is required to achieve full enzymatic activity. Post-translationally, polyubiquitinated by TRAF6 after cell stimulation with IL-1-beta by PELI1, PELI2 and PELI3. Polyubiquitination occurs with polyubiquitin chains linked through 'Lys-63'. Ubiquitination promotes interaction with NEMO/IKBKG. Also sumoylated; leading to nuclear translocation. In terms of tissue distribution, isoform 1 and isoform 2 are ubiquitously expressed in all tissues examined, with isoform 1 being more strongly expressed than isoform 2.

It is found in the cytoplasm. It localises to the nucleus. The protein localises to the lipid droplet. The catalysed reaction is L-seryl-[protein] + ATP = O-phospho-L-seryl-[protein] + ADP + H(+). It carries out the reaction L-threonyl-[protein] + ATP = O-phospho-L-threonyl-[protein] + ADP + H(+). Serine/threonine-protein kinase that plays a critical role in initiating innate immune response against foreign pathogens. Involved in Toll-like receptor (TLR) and IL-1R signaling pathways. Is rapidly recruited by MYD88 to the receptor-signaling complex upon TLR activation. Association with MYD88 leads to IRAK1 phosphorylation by IRAK4 and subsequent autophosphorylation and kinase activation. Phosphorylates E3 ubiquitin ligases Pellino proteins (PELI1, PELI2 and PELI3) to promote pellino-mediated polyubiquitination of IRAK1. Then, the ubiquitin-binding domain of IKBKG/NEMO binds to polyubiquitinated IRAK1 bringing together the IRAK1-MAP3K7/TAK1-TRAF6 complex and the NEMO-IKKA-IKKB complex. In turn, MAP3K7/TAK1 activates IKKs (CHUK/IKKA and IKBKB/IKKB) leading to NF-kappa-B nuclear translocation and activation. Alternatively, phosphorylates TIRAP to promote its ubiquitination and subsequent degradation. Phosphorylates the interferon regulatory factor 7 (IRF7) to induce its activation and translocation to the nucleus, resulting in transcriptional activation of type I IFN genes, which drive the cell in an antiviral state. When sumoylated, translocates to the nucleus and phosphorylates STAT3. The chain is Interleukin-1 receptor-associated kinase 1 from Homo sapiens (Human).